Consider the following 276-residue polypeptide: Pantothenate synthetase (276 aa).

27 to 34 is a binding site for ATP; the sequence is MGALHRGH. The Proton donor role is filled by histidine 34. Residue glutamine 58 coordinates (R)-pantoate. A beta-alanine-binding site is contributed by glutamine 58. Residue 147–150 coordinates ATP; it reads GKKD. Glutamine 153 is a binding site for (R)-pantoate. ATP is bound by residues alanine 176 and 184-187; that span reads LSSR.

It belongs to the pantothenate synthetase family. In terms of assembly, homodimer.

The protein localises to the cytoplasm. It carries out the reaction (R)-pantoate + beta-alanine + ATP = (R)-pantothenate + AMP + diphosphate + H(+). The protein operates within cofactor biosynthesis; (R)-pantothenate biosynthesis; (R)-pantothenate from (R)-pantoate and beta-alanine: step 1/1. Its function is as follows. Catalyzes the condensation of pantoate with beta-alanine in an ATP-dependent reaction via a pantoyl-adenylate intermediate. The polypeptide is Pantothenate synthetase (Helicobacter pylori (strain P12)).